Here is a 184-residue protein sequence, read N- to C-terminus: Signal peptidase complex subunit 3 (184 aa).

Residues 1–14 (MFSFVQRFQNVSNQ) lie on the Cytoplasmic side of the membrane. Residues 15-35 (AFSMGIVMVVFIMASSYYQLI) form a helical; Signal-anchor for type II membrane protein membrane-spanning segment. The Lumenal portion of the chain corresponds to 36–184 (NNNAFSVPSN…TLTVENKNKV (149 aa)). Residues N102 and N173 are each glycosylated (N-linked (GlcNAc...) asparagine).

It belongs to the SPCS3 family. In terms of assembly, component of the signal peptidase complex (SPC) composed of a catalytic subunit SEC11 and three accessory subunits SPC1, SPC2 and SPC3. The complex induces a local thinning of the ER membrane which is used to measure the length of the signal peptide (SP) h-region of protein substrates. This ensures the selectivity of the complex towards h-regions shorter than 18-20 amino acids. Interacts with SEC11. SPC associates with the translocon complex.

The protein localises to the endoplasmic reticulum membrane. In terms of biological role, essential component of the signal peptidase complex (SPC) which catalyzes the cleavage of N-terminal signal sequences from nascent proteins as they are translocated into the lumen of the endoplasmic reticulum. Essential for the SPC catalytic activity, possibly by stabilizing and positioning the active center of the complex close to the lumenal surface. Essential for viability. This chain is Signal peptidase complex subunit 3 (SPC3), found in Saccharomyces cerevisiae (strain ATCC 204508 / S288c) (Baker's yeast).